Reading from the N-terminus, the 130-residue chain is Albumin-1 D (130 aa).

A signal peptide spans 1-26 (MASVKLASLIVLFATLGMFLTKNVGA). Cystine bridges form between cysteine 29–cysteine 46, cysteine 33–cysteine 48, and cysteine 41–cysteine 58. Propeptides lie at residues 64 to 69 (VFLKAN) and 123 to 130 (LLKSVSTA).

In terms of processing, the C-terminal glycine may be removed from PA1b. In terms of tissue distribution, major component of both the cotyledons and embryonic axes of mature seeds.

Its function is as follows. PA1b binds to basic 7S globulin (BG) and stimulates its phosphorylation activity. Involved in the signal transduction system to regulate the growth and differentiation as a hormone peptide. Toxic to various insects through binding to a high affinity binding site in the insect gut. The protein is Albumin-1 D of Pisum sativum (Garden pea).